The following is a 451-amino-acid chain: Phosphoglucosamine mutase (451 aa).

Ser-102 functions as the Phosphoserine intermediate in the catalytic mechanism. Ser-102, Asp-243, Asp-245, and Asp-247 together coordinate Mg(2+). The residue at position 102 (Ser-102) is a Phosphoserine.

It belongs to the phosphohexose mutase family. Requires Mg(2+) as cofactor. Post-translationally, activated by phosphorylation.

It catalyses the reaction alpha-D-glucosamine 1-phosphate = D-glucosamine 6-phosphate. In terms of biological role, catalyzes the conversion of glucosamine-6-phosphate to glucosamine-1-phosphate. The chain is Phosphoglucosamine mutase from Chelativorans sp. (strain BNC1).